The primary structure comprises 224 residues: Cytidylate kinase (224 aa).

11-19 (GPASAGKST) provides a ligand contact to ATP.

This sequence belongs to the cytidylate kinase family. Type 1 subfamily.

It is found in the cytoplasm. The enzyme catalyses CMP + ATP = CDP + ADP. It carries out the reaction dCMP + ATP = dCDP + ADP. The sequence is that of Cytidylate kinase from Ligilactobacillus salivarius (strain UCC118) (Lactobacillus salivarius).